A 493-amino-acid polypeptide reads, in one-letter code: UDP-N-acetylmuramoyl-L-alanyl-D-glutamate--2,6-diaminopimelate ligase (493 aa).

Residue Ser-31 participates in UDP-N-acetyl-alpha-D-muramoyl-L-alanyl-D-glutamate binding. 111 to 117 contributes to the ATP binding site; it reads GTNGKTT. Residues Asn-152, 153–154, Ser-180, and Arg-188 each bind UDP-N-acetyl-alpha-D-muramoyl-L-alanyl-D-glutamate; that span reads TT. An N6-carboxylysine modification is found at Lys-220. Residues Arg-386, 410–413, Gly-462, and Glu-466 each bind meso-2,6-diaminopimelate; that span reads DNPR. The Meso-diaminopimelate recognition motif signature appears at 410–413; that stretch reads DNPR.

Belongs to the MurCDEF family. MurE subfamily. Mg(2+) is required as a cofactor. In terms of processing, carboxylation is probably crucial for Mg(2+) binding and, consequently, for the gamma-phosphate positioning of ATP.

The protein localises to the cytoplasm. It catalyses the reaction UDP-N-acetyl-alpha-D-muramoyl-L-alanyl-D-glutamate + meso-2,6-diaminopimelate + ATP = UDP-N-acetyl-alpha-D-muramoyl-L-alanyl-gamma-D-glutamyl-meso-2,6-diaminopimelate + ADP + phosphate + H(+). The protein operates within cell wall biogenesis; peptidoglycan biosynthesis. Functionally, catalyzes the addition of meso-diaminopimelic acid to the nucleotide precursor UDP-N-acetylmuramoyl-L-alanyl-D-glutamate (UMAG) in the biosynthesis of bacterial cell-wall peptidoglycan. The sequence is that of UDP-N-acetylmuramoyl-L-alanyl-D-glutamate--2,6-diaminopimelate ligase (murE1) from Oceanobacillus iheyensis (strain DSM 14371 / CIP 107618 / JCM 11309 / KCTC 3954 / HTE831).